A 154-amino-acid chain; its full sequence is Nuclear cap-binding protein subunit 2 (154 aa).

The interval 1–23 (MTASVDLSSYRDQHFKGSRSEQE) is disordered. A compositionally biased stretch (basic and acidic residues) spans 9-23 (SYRDQHFKGSRSEQE). MRNA contacts are provided by residues Tyr-10, Tyr-33, 102–106 (RVDWD), 113–117 (RQYGR), and 123–124 (QV). The RRM domain occupies 30–108 (TTLYVGNLSF…RLIRVDWDAG (79 aa)).

The protein belongs to the RRM NCBP2 family. As to quaternary structure, component of the nuclear cap-binding complex (CBC), a heterodimer composed of Cbp80 and Cbp20 that interacts with m7GpppG-capped RNA. Interacts with Ars2.

It localises to the nucleus. Functionally, component of the cap-binding complex (CBC), which binds co-transcriptionally to the 5' cap of pre-mRNAs and is involved in various processes such as pre-mRNA splicing and RNA-mediated gene silencing (RNAi). The CBC complex is involved in miRNA-mediated RNA interference via its interaction with Ars2 and is required for primary microRNAs (miRNAs) processing. Also involved in innate immunity via the short interfering RNAs (siRNAs) processing machinery by restricting the viral RNA production. In the CBC complex, Cbp20 recognizes and binds capped RNAs (m7GpppG-capped RNA) but requires Cbp80 to stabilize the movement of its N-terminal loop and lock the CBC into a high affinity cap-binding state with the cap structure. The polypeptide is Nuclear cap-binding protein subunit 2 (Cbp20) (Drosophila grimshawi (Hawaiian fruit fly)).